Reading from the N-terminus, the 1163-residue chain is E3 ubiquitin-protein ligase TRIM33 (1163 aa).

Positions 1–119 (MEVEASGTED…ASTSSSSSTP (119 aa)) are disordered. Positions 27–38 (TETKEAADEAKS) are enriched in basic and acidic residues. Over residues 45–54 (TPTTSSDSSS) the composition is skewed to low complexity. Pro residues predominate over residues 72-87 (DPPPPPPPPPPPPPST). A compositionally biased stretch (low complexity) spans 88 to 99 (PADSTAAAASPA). The RING-type zinc-finger motif lies at 129 to 188 (CAVCKQSLQNRDCEPKLLPCLHSFCLKCIPQPDRKITMPVQGPHGQDTRIVNVMRCTVCH). The B box-type 1; atypical zinc-finger motif lies at 215 to 268 (NSTQVCTSCEDNASAIGFCVECGEWLCKTCIEAHQRVKFTKDHKIRKKEEVSPE). 8 residues coordinate Zn(2+): C220, C223, C244, H257, C280, H283, C303, and H308. Residues 275 to 316 (QRPVFCPVHKQEALKLFCETCDTLTCRDCQLLEHKEHRYQFL) form a B box-type 2 zinc finger. Positions 345–369 (ASEVQKRLKEVAETHKKVEHEIKIA) form a coiled coil. The span at 524–533 (MQQAAIAQKH) shows a compositional bias: low complexity. 5 disordered regions span residues 524 to 555 (MQQA…QQQQ), 575 to 599 (QIQQ…QMIQ), 656 to 706 (LQRQ…VITP), 753 to 848 (TVGP…PLPI), and 867 to 918 (NVKS…KEDD). Residues 534–548 (QQQHQHHQQQQHQHQ) are compositionally biased toward basic residues. A compositionally biased stretch (polar residues) spans 580-590 (MRIASQMSQHP). 2 stretches are compositionally biased toward low complexity: residues 678–691 (SAAN…ASMA) and 753–797 (TVGP…SGTT). The segment covering 821–830 (KTERTKDGRR) has biased composition (basic and acidic residues). Positions 870-889 (SEPQSDNLSSCTNPNSRATL) are enriched in polar residues. The segment at 921–968 (EDWCAVCQNGGELLCCDHCPKVFHITCHIPTLKSSPSGDWMCTFCRNL) adopts a PHD-type zinc-finger fold. In terms of domain architecture, Bromo spans 991-1114 (AMSPEEQRRC…LYFEERLLEI (124 aa)). Positions 1128–1147 (TQIEAEKEDSDDSDDDIIQP) are disordered. A compositionally biased stretch (acidic residues) spans 1133-1144 (EKEDSDDSDDDI).

The protein localises to the nucleus. It carries out the reaction S-ubiquitinyl-[E2 ubiquitin-conjugating enzyme]-L-cysteine + [acceptor protein]-L-lysine = [E2 ubiquitin-conjugating enzyme]-L-cysteine + N(6)-ubiquitinyl-[acceptor protein]-L-lysine.. It functions in the pathway protein modification; protein ubiquitination. Its function is as follows. May act as an E3 ubiquitin-protein ligase and a transcriptional repressor. Involved in the regulation of embryonic and adult hematopoiesis. Required for normal development and survival of both committed erythroid progenitor cells and posterior mesenchymal cells. This chain is E3 ubiquitin-protein ligase TRIM33 (trim33), found in Danio rerio (Zebrafish).